The primary structure comprises 349 residues: Heat-inducible transcription repressor HrcA (349 aa).

It belongs to the HrcA family.

Its function is as follows. Negative regulator of class I heat shock genes (grpE-dnaK-dnaJ and groELS operons). Prevents heat-shock induction of these operons. The polypeptide is Heat-inducible transcription repressor HrcA (Xylella fastidiosa (strain 9a5c)).